Consider the following 70-residue polypeptide: MSSPQLPAFLWDKGTLTTAISNPACLVNVLFFFTPLMTLVTLLILVWKVTKDKSNKNRETHPRKEATWLP.

Residues 26–46 (LVNVLFFFTPLMTLVTLLILV) traverse the membrane as a helical segment.

The protein localises to the membrane. In Homo sapiens (Human), this protein is Small integral membrane protein 42.